Here is a 162-residue protein sequence, read N- to C-terminus: uncharacterized protein (162 aa).

An N-terminal signal peptide occupies residues 1-24 (MCKRFKFLLAVSALFISITVVLAG). A lipid anchor (N-palmitoyl cysteine) is attached at cysteine 25. A lipid anchor (S-diacylglycerol cysteine) is attached at cysteine 25.

The protein resides in the cell membrane. This is an uncharacterized protein from Bacillus anthracis.